Consider the following 140-residue polypeptide: Large ribosomal subunit protein uL11 (140 aa).

This sequence belongs to the universal ribosomal protein uL11 family. In terms of assembly, part of the ribosomal stalk of the 50S ribosomal subunit. Interacts with L10 and the large rRNA to form the base of the stalk. L10 forms an elongated spine to which L12 dimers bind in a sequential fashion forming a multimeric L10(L12)X complex. Post-translationally, one or more lysine residues are methylated.

Forms part of the ribosomal stalk which helps the ribosome interact with GTP-bound translation factors. In Desulforapulum autotrophicum (strain ATCC 43914 / DSM 3382 / VKM B-1955 / HRM2) (Desulfobacterium autotrophicum), this protein is Large ribosomal subunit protein uL11.